A 482-amino-acid chain; its full sequence is Histone deacetylase 1 (482 aa).

Residues 9-321 are histone deacetylase; the sequence is RKVCYYYDGD…WTYETAVALD (313 aa). Residues Gly-27 and Lys-31 each coordinate 1D-myo-inositol 1,4,5,6-tetrakisphosphate. The residue at position 74 (Lys-74) is an N6-acetyllysine; alternate. Residue Lys-74 forms a Glycyl lysine isopeptide (Lys-Gly) (interchain with G-Cter in SUMO2); alternate linkage. His-141 is a catalytic residue. Residues Asp-176 and His-178 each contribute to the Zn(2+) site. Lys-220 carries the N6-acetyllysine modification. Cys-261 bears the S-nitrosocysteine mark. Residue Asp-264 coordinates Zn(2+). Residue Arg-270 coordinates 1D-myo-inositol 1,4,5,6-tetrakisphosphate. Residue Cys-273 is modified to S-nitrosocysteine. Positions 390 to 400 are enriched in acidic residues; it reads PEESGDEDEDD. Positions 390 to 482 are disordered; that stretch reads PEESGDEDED…KGVKEEVKLA (93 aa). Phosphoserine occurs at positions 393, 406, and 409. Basic and acidic residues predominate over residues 401-416; the sequence is PDKRISICSSDKRIAC. The span at 417 to 427 shows a compositional bias: acidic residues; it reads EEEFSDSEEEG. Phosphoserine; by CK2 occurs at positions 421 and 423. Lys-432 carries the N6-methylated lysine; by EHMT2 modification. Residue Lys-438 forms a Glycyl lysine isopeptide (Lys-Gly) (interchain with G-Cter in SUMO2) linkage. Positions 443–482 are enriched in basic and acidic residues; it reads VKTEDEKEKDPEEKKEVTEEEKTKEEKPEAKGVKEEVKLA. A Glycyl lysine isopeptide (Lys-Gly) (interchain with G-Cter in SUMO2); alternate cross-link involves residue Lys-444. Lys-444 is covalently cross-linked (Glycyl lysine isopeptide (Lys-Gly) (interchain with G-Cter in SUMO); alternate). Residues Lys-456, Lys-457, and Lys-473 each participate in a glycyl lysine isopeptide (Lys-Gly) (interchain with G-Cter in SUMO2) cross-link. A Glycyl lysine isopeptide (Lys-Gly) (interchain with G-Cter in SUMO2); alternate cross-link involves residue Lys-476. A Glycyl lysine isopeptide (Lys-Gly) (interchain with G-Cter in SUMO); alternate cross-link involves residue Lys-476. Lys-480 participates in a covalent cross-link: Glycyl lysine isopeptide (Lys-Gly) (interchain with G-Cter in SUMO2).

Belongs to the histone deacetylase family. HD type 1 subfamily. In terms of assembly, part of the core histone deacetylase (HDAC) complex composed of HDAC1, HDAC2, RBBP4 and RBBP7, the core complex associates with SIN3, SAP18 and SAP30 to form the SIN3 HDAC complex. Component of the nucleosome remodeling and deacetylase (NuRD) repressor complex, composed of core proteins MTA1, MTA2, MTA3, RBBP4, RBBP7, HDAC1, HDAC2, MBD2, MBD3, and peripherally associated proteins CDK2AP1, CDK2AP2, GATAD2A, GATAD2B, CHD3, CHD4 and CHD5. The exact stoichiometry of the NuRD complex is unknown, and some subunits such as MBD2 and MBD3, GATAD2A and GATAD2B, and CHD3, CHD4 and CHD5 define mutually exclusive NuRD complexes. Component of a BHC histone deacetylase complex that contains HDAC1, HDAC2, HMG20B/BRAF35, KDM1A, RCOR1/CoREST and PHF21A/BHC80. The BHC complex may also contain ZMYM2, ZNF217, ZMYM3, GSE1 and GTF2I. Component of a mSin3A corepressor complex that contains SIN3A, SAP130, SUDS3/SAP45, ARID4B/SAP180, HDAC1 and HDAC2. Component of the SIN3B complex, which includes SIN3B, HDAC1, PHF12 and MORF4L1. Found in a trimeric complex with APBB1 and TSHZ3; the interaction between HDAC1 and APBB1 is mediated by TSHZ3. Forms a complex comprising APPL1, RUVBL2, APPL2, CTNNB1 and HDAC2. Component of a RCOR/GFI/KDM1A/HDAC complex. Part of a complex composed of TRIM28, HDAC1, HDAC2 and EHMT2. Part of a complex containing at least CDYL, MIER1, MIER2, HDAC1 and HDAC2. The large PER complex involved in the histone deacetylation is composed of at least HDAC1, PER2, SFPQ and SIN3A. Associates with the 9-1-1 complex; interacts with HUS1. Found in a complex with DNMT3A and HDAC7. Found in a complex with YY1, SIN3A and GON4L. Identified in a histone deacetylase complex that contains DNTTIP1, HDAC1 and MIDEAS; this complex assembles into a tetramer that contains four copies of each protein chain. Found in a complex composed of at least SINHCAF, SIN3A, HDAC1, SAP30, RBBP4, OGT and TET1. Interacts with GFI1; the interaction is direct. Interacts directly with GFI1B. Interacts with TSHZ3 (via N-terminus); the interaction is direct. Interacts with APEX1; the interaction is not dependent on the acetylated status of APEX1. Interacts with BANP. Interacts with BAZ2A/TIP5. Interacts with BCL6. Interacts with BCOR. Interacts with BHLHE40/DEC1. Interacts with BRCC3; this interaction is enhanced in the presence of PWWP2B. Interacts with BRMS1. Interacts with BRMS1L. Interacts with C10orf90/FATS (via its N-terminal); the interaction prevents binding of HDAC1 to CDKN1A/p21 and facilitates the acetylation and stabilization of CDKN1A/p21. Interacts with CBFA2T3. Interacts with CCAR2. Interacts with CDK2AP1. Interacts with CHD3. Interacts with CHD4. Interacts with CHFR. Interacts with CIART. Interacts with CDKN1A/p21. Interacts with CDK5 complexed to CDK5R1 (p25). Interacts with CRY1. Interacts with DAXX. Interacts with DDIT3/CHOP. Interacts with DDX5. Interacts with DHX36; this interaction occurs in a RNA-dependent manner. Interacts with DNMT1. Interacts with DNTTIP1. Interacts with E4F1. Interacts with EP300. Interacts with ERCC6. Interacts with GATAD2A. Interacts with HCFC1. Interacts with HDAC9. Interacts with HUS1. Interacts with INSM1. Interacts with KDM4A. Interacts with KDM5A; this interaction impairs histone deacetylation. Interacts with KDM5B. Interacts with KLF1. Interacts with MBD3L2. Interacts with MIER1. Interacts with NFE4. Interacts with NR4A2/NURR1. Interacts with NR1D2 (via C-terminus). Interacts with NRIP1. Interacts with NSD2. Interacts with PACS2. Interacts with PHB2. Interacts with PPHLN1. Interacts with PRDM6. Interacts with PRDM16. Interacts with PWWP2A in a MTA1-dependent manner. Interacts with PWWP2B. Interacts with RB1. Interacts with RERE. Interacts with SANBR (via the BTB domain). Interacts with SAMSN1. Interacts with SAP30L. Interacts with SETDB1. Interacts with SIN3A. Interacts with SMAD3. Interacts with SMAD4; positively regulated by ZBTB7A. Interacts with SMARCAD1. Interacts with SMARCA4/BRG1. Interacts with SMYD2. Interacts with SMYD4 (via MYND-type zinc finger). Interacts with SP1; the interaction deacetylates SP1 and regulates its transcriptional activity. Interacts with SP3; the interaction deacetylates SP3 and regulates its transcriptional activity. In vitro, C(18) ceramides increase this interaction and the subsequent SP3 deacetylation and SP3-mediated repression of the TERT promoter. Interacts with SPEN/MINT. Interacts with SPHK2. Interacts with SUV39H1. Interacts with TGIF. Interacts with TGIF2. Interacts with TRAF6. Interacts with TRIM28; the interaction recruits HDAC1 to E2F1 and inhibits its acetylation. Interacts with TSC22D3 isoform 1; this interaction affects HDAC1 activity on MYOG promoter and thus inhibits MYOD1 transcriptional activity. Interacts with UHRF1. Interacts with UHRF2. Interacts with ZBTB7A. Interacts with ZMYND8. Interacts with ZMYND15. Interacts with ZNF431. Interacts with ZNF516; this interaction is enhanced in the presence of PWWP2B. Interacts with ZNF541. Interacts with ZNF638. Interacts with ZNHIT1. Interacts with the non-histone region of MACROH2A1. Identified in a complex with HDAC2, KCTD19, DNTTIP1 and ZNF541. Interacts with VRK1. As to quaternary structure, (Microbial infection) Interacts with SV40 large T antigen. The cofactor is Zn(2+). In terms of processing, sumoylated on Lys-444 and Lys-476; which promotes enzymatic activity. Desumoylated by SENP1. Post-translationally, phosphorylation on Ser-421 and Ser-423 promotes enzymatic activity and interactions with NuRD and SIN3 complexes. Phosphorylated by CDK5. Ubiquitinated by CHFR, leading to its degradation by the proteasome. Ubiquitinated by KCTD11, leading to proteasomal degradation. As to expression, ubiquitous, with higher levels in heart, pancreas and testis, and lower levels in kidney and brain.

It is found in the nucleus. The enzyme catalyses N(6)-acetyl-L-lysyl-[histone] + H2O = L-lysyl-[histone] + acetate. The catalysed reaction is N(6)-acetyl-L-lysyl-[protein] + H2O = L-lysyl-[protein] + acetate. It carries out the reaction N(6)-(2E)-butenoyl-L-lysyl-[protein] + H2O = (2E)-2-butenoate + L-lysyl-[protein]. It catalyses the reaction N(6)-[(S)-lactoyl]-L-lysyl-[protein] + H2O = (S)-lactate + L-lysyl-[protein]. Inositol tetraphosphate (1D-myo-inositol 1,4,5,6-tetrakisphosphate) may act as an intermolecular glue between HDAC1 and N-Cor repressor complex components. Its function is as follows. Histone deacetylase that catalyzes the deacetylation of lysine residues on the N-terminal part of the core histones (H2A, H2B, H3 and H4). Histone deacetylation gives a tag for epigenetic repression and plays an important role in transcriptional regulation, cell cycle progression and developmental events. Histone deacetylases act via the formation of large multiprotein complexes. Acts as a component of the histone deacetylase NuRD complex which participates in the remodeling of chromatin. As part of the SIN3B complex is recruited downstream of the constitutively active genes transcriptional start sites through interaction with histones and mitigates histone acetylation and RNA polymerase II progression within transcribed regions contributing to the regulation of transcription. Also functions as a deacetylase for non-histone targets, such as NR1D2, RELA, SP1, SP3, STAT3 and TSHZ3. Deacetylates SP proteins, SP1 and SP3, and regulates their function. Component of the BRG1-RB1-HDAC1 complex, which negatively regulates the CREST-mediated transcription in resting neurons. Upon calcium stimulation, HDAC1 is released from the complex and CREBBP is recruited, which facilitates transcriptional activation. Deacetylates TSHZ3 and regulates its transcriptional repressor activity. Deacetylates 'Lys-310' in RELA and thereby inhibits the transcriptional activity of NF-kappa-B. Deacetylates NR1D2 and abrogates the effect of KAT5-mediated relieving of NR1D2 transcription repression activity. Component of a RCOR/GFI/KDM1A/HDAC complex that suppresses, via histone deacetylase (HDAC) recruitment, a number of genes implicated in multilineage blood cell development. Involved in CIART-mediated transcriptional repression of the circadian transcriptional activator: CLOCK-BMAL1 heterodimer. Required for the transcriptional repression of circadian target genes, such as PER1, mediated by the large PER complex or CRY1 through histone deacetylation. In addition to protein deacetylase activity, also has protein-lysine deacylase activity: acts as a protein decrotonylase and delactylase by mediating decrotonylation ((2E)-butenoyl) and delactylation (lactoyl) of histones, respectively. In Homo sapiens (Human), this protein is Histone deacetylase 1.